The sequence spans 580 residues: NADH-quinone oxidoreductase subunit C/D (580 aa).

The tract at residues 1–171 (MSLDQAIPEA…PPFVLTDRLF (171 aa)) is NADH dehydrogenase I subunit C. The interval 195-580 (ELMVLNFGPH…IDFVMSDVDR (386 aa)) is NADH dehydrogenase I subunit D.

The protein in the N-terminal section; belongs to the complex I 30 kDa subunit family. It in the C-terminal section; belongs to the complex I 49 kDa subunit family. NDH-1 is composed of 13 different subunits. Subunits NuoB, CD, E, F, and G constitute the peripheral sector of the complex.

The protein localises to the cell inner membrane. It catalyses the reaction a quinone + NADH + 5 H(+)(in) = a quinol + NAD(+) + 4 H(+)(out). Functionally, NDH-1 shuttles electrons from NADH, via FMN and iron-sulfur (Fe-S) centers, to quinones in the respiratory chain. The immediate electron acceptor for the enzyme in this species is believed to be ubiquinone. Couples the redox reaction to proton translocation (for every two electrons transferred, four hydrogen ions are translocated across the cytoplasmic membrane), and thus conserves the redox energy in a proton gradient. The protein is NADH-quinone oxidoreductase subunit C/D of Cereibacter sphaeroides (strain KD131 / KCTC 12085) (Rhodobacter sphaeroides).